The sequence spans 219 residues: uncharacterized protein (219 aa).

The chain crosses the membrane as a helical span at residues 28–50 (IVSSLIAGGYALFVSAFTSYVYT). The stretch at 155-218 (EILRESLSEI…EEIEKELEFF (64 aa)) forms a coiled coil.

The protein resides in the membrane. This is an uncharacterized protein from Aquifex aeolicus (strain VF5).